The chain runs to 129 residues: Profilin-4 (129 aa).

This sequence belongs to the profilin family. Expressed in testis, in seminiferous tubules (at protein level). Expressed in spermatocytes and spermatids, but not in spermatogonium.

It is found in the cytoplasm. In terms of biological role, involved in male fertility. Required for manchette development and acrosome biogenesis during spermiogenesis. Binds in vitro to phospholipids, including phosphatidylinositol 3-phosphate (PtdIns(3)P), phosphatidylinositol 4,5-bisphosphate (PtdIns(4,5)P2), phosphatidylinositol 4-phosphate (PtdIns(4)P) and phosphatidic acid (PA). Contrary to other profilin family members, does not bind to actin in vitro. In Rattus norvegicus (Rat), this protein is Profilin-4 (Pfn4).